The following is a 355-amino-acid chain: Ion-translocating oxidoreductase complex subunit D (355 aa).

The next 5 membrane-spanning stretches (helical) occupy residues 13–33 (GKLT…ALAV), 35–55 (VYYF…LALI), 77–97 (VILT…YWVI), 98–118 (LIGT…LGQN), and 128–148 (VVLL…ISLL). Threonine 186 is subject to FMN phosphoryl threonine. 5 helical membrane passes run 216-236 (AGLG…FLIW), 245-265 (PVAI…FGNA), 267-287 (AVGF…FFIA), 294-314 (PVTP…ICLI), and 318-338 (GNYP…VPLI).

The protein belongs to the NqrB/RnfD family. As to quaternary structure, the complex is composed of six subunits: RnfA, RnfB, RnfC, RnfD, RnfE and RnfG. It depends on FMN as a cofactor.

The protein localises to the cell inner membrane. Its function is as follows. Part of a membrane-bound complex that couples electron transfer with translocation of ions across the membrane. The chain is Ion-translocating oxidoreductase complex subunit D from Actinobacillus succinogenes (strain ATCC 55618 / DSM 22257 / CCUG 43843 / 130Z).